A 1057-amino-acid polypeptide reads, in one-letter code: mRNA export factor elf1 (1057 aa).

2 consecutive ABC transporter domains span residues 440–659 (IEEE…VKPE) and 692–1019 (LKMT…KKKL). ATP is bound by residues 477–484 (GHNGCGKS) and 726–733 (GPNGAGKS). Ser-733 carries the post-translational modification Phosphoserine. Positions 820–869 (RRVEALIGRQKLKKSFQYEIKWFGKPHKYNTWVSREILLENGFQKFVQAF) constitute a Chromo domain. The segment covering 1020–1036 (TRNEIKAKERRAREREL) has biased composition (basic and acidic residues). The segment at 1020 to 1057 (TRNEIKAKERRARERELAWLQSPKGTEKPKSFFSDDEE) is disordered. Residues Ser-1041 and Ser-1053 each carry the phosphoserine modification.

Belongs to the ABC transporter superfamily. ABCF family. EF3 subfamily.

It localises to the cytoplasm. The protein localises to the nucleus. Its function is as follows. Has a direct role in the mRNA export process. Appears to act within the rae1 mediated mRNA export pathway. This chain is mRNA export factor elf1 (elf1), found in Schizosaccharomyces pombe (strain 972 / ATCC 24843) (Fission yeast).